A 609-amino-acid polypeptide reads, in one-letter code: Dihydroxy-acid dehydratase (609 aa).

Aspartate 82 is a binding site for Mg(2+). Cysteine 123 contacts [2Fe-2S] cluster. Mg(2+)-binding residues include aspartate 124 and lysine 125. The residue at position 125 (lysine 125) is an N6-carboxylysine. Cysteine 192 serves as a coordination point for [2Fe-2S] cluster. Glutamate 489 is a binding site for Mg(2+). The active-site Proton acceptor is the serine 515.

The protein belongs to the IlvD/Edd family. Homodimer. Requires [2Fe-2S] cluster as cofactor. It depends on Mg(2+) as a cofactor.

It catalyses the reaction (2R)-2,3-dihydroxy-3-methylbutanoate = 3-methyl-2-oxobutanoate + H2O. The catalysed reaction is (2R,3R)-2,3-dihydroxy-3-methylpentanoate = (S)-3-methyl-2-oxopentanoate + H2O. Its pathway is amino-acid biosynthesis; L-isoleucine biosynthesis; L-isoleucine from 2-oxobutanoate: step 3/4. The protein operates within amino-acid biosynthesis; L-valine biosynthesis; L-valine from pyruvate: step 3/4. In terms of biological role, functions in the biosynthesis of branched-chain amino acids. Catalyzes the dehydration of (2R,3R)-2,3-dihydroxy-3-methylpentanoate (2,3-dihydroxy-3-methylvalerate) into 2-oxo-3-methylpentanoate (2-oxo-3-methylvalerate) and of (2R)-2,3-dihydroxy-3-methylbutanoate (2,3-dihydroxyisovalerate) into 2-oxo-3-methylbutanoate (2-oxoisovalerate), the penultimate precursor to L-isoleucine and L-valine, respectively. This chain is Dihydroxy-acid dehydratase, found in Azobacteroides pseudotrichonymphae genomovar. CFP2.